The following is a 256-amino-acid chain: MTQPLIIANTPFSSRLFTGTGKFPNSLIMQQALIESGSELATMALKRVDVSNPEDDILKPIMTAGINLLPNTSGAKNAREAIFAAQLAREALQTNWLKLEIHPDPKYLMPDPIETLKAAEELVRQGFIVLPYCHADPVLCKRLEEVGCAAVMPLGAPIGSNKGIVSRDFLEIIIDQAKVPVVVDAGIGAPSHAAFAMELGADAVLVNTAIAAARNPVAMATAFKLAVQSGRLAYENGLVSVSSQAVASSPLTAFLD.

K98 (schiff-base intermediate with DXP) is an active-site residue. 1-deoxy-D-xylulose 5-phosphate contacts are provided by residues G159, 185–186 (AG), and 207–208 (NT).

It belongs to the ThiG family. Homotetramer. Forms heterodimers with either ThiH or ThiS.

It is found in the cytoplasm. It catalyses the reaction [ThiS sulfur-carrier protein]-C-terminal-Gly-aminoethanethioate + 2-iminoacetate + 1-deoxy-D-xylulose 5-phosphate = [ThiS sulfur-carrier protein]-C-terminal Gly-Gly + 2-[(2R,5Z)-2-carboxy-4-methylthiazol-5(2H)-ylidene]ethyl phosphate + 2 H2O + H(+). It participates in cofactor biosynthesis; thiamine diphosphate biosynthesis. Functionally, catalyzes the rearrangement of 1-deoxy-D-xylulose 5-phosphate (DXP) to produce the thiazole phosphate moiety of thiamine. Sulfur is provided by the thiocarboxylate moiety of the carrier protein ThiS. In vitro, sulfur can be provided by H(2)S. The polypeptide is Thiazole synthase (Aliivibrio salmonicida (strain LFI1238) (Vibrio salmonicida (strain LFI1238))).